The primary structure comprises 892 residues: LEAF RUST 10 DISEASE-RESISTANCE LOCUS RECEPTOR-LIKE PROTEIN KINASE-like 2.8 (892 aa).

A signal peptide spans 1 to 27 (MYYHSLSSYSILFFLFSLFHHLPCASS). The Extracellular segment spans residues 28–496 (NQGLGWCESL…RFIATLVRYT (469 aa)). N-linked (GlcNAc...) asparagine glycosylation is found at N42, N71, N88, N112, N186, N222, N230, N286, N358, N384, N407, and N458. A helical transmembrane segment spans residues 497–517 (FIALGALTGVVIVFLVLLCPC). Over 518–892 (FRVQIFRKRK…TNSKLESSSL (375 aa)) the chain is Cytoplasmic. Position 547 is a phosphothreonine (T547). Residues 556 to 854 (KSFTEVVGRG…ALEVPPRPVL (299 aa)) enclose the Protein kinase domain. Residues 562–570 (VGRGGFGIV) and K584 each bind ATP. Y629 carries the post-translational modification Phosphotyrosine. Residue D680 is the Proton acceptor of the active site. Residues T717 and T720 each carry the phosphothreonine modification.

It belongs to the protein kinase superfamily. Ser/Thr protein kinase family.

It is found in the membrane. It catalyses the reaction L-seryl-[protein] + ATP = O-phospho-L-seryl-[protein] + ADP + H(+). The enzyme catalyses L-threonyl-[protein] + ATP = O-phospho-L-threonyl-[protein] + ADP + H(+). In Arabidopsis thaliana (Mouse-ear cress), this protein is LEAF RUST 10 DISEASE-RESISTANCE LOCUS RECEPTOR-LIKE PROTEIN KINASE-like 2.8.